Reading from the N-terminus, the 79-residue chain is Putative defensin-like protein 146 (79 aa).

Positions 1 to 25 (MMKNQFQLSLIILTFFILLELGVMG) are cleaved as a signal peptide. 4 cysteine pairs are disulfide-bonded: Cys35-Cys78, Cys46-Cys66, Cys51-Cys72, and Cys55-Cys74.

The protein belongs to the DEFL family.

Its subcellular location is the secreted. This chain is Putative defensin-like protein 146 (LCR9), found in Arabidopsis thaliana (Mouse-ear cress).